Reading from the N-terminus, the 245-residue chain is Carboxymethylenebutenolidase homolog (245 aa).

Residue A2 is modified to N-acetylalanine. N6-acetyllysine is present on K36. Catalysis depends on residues C132, D179, and H212. The residue at position 223 (S223) is a Phosphoserine.

It belongs to the dienelactone hydrolase family. In terms of tissue distribution, widely expressed, with highest levels in liver, followed by kidney, small intestine and colon. Present in liver and intestine (at protein level).

Its subcellular location is the cytoplasm. It is found in the cytosol. With respect to regulation, strongly inhibited by p-chloromercuribenzoate (PCMB). Partially inhibited by bis-p-nitrophenylphosphate (BNPP). Not inhibited by DFP, PMSF, eserine or EDTA. Its function is as follows. Cysteine hydrolase. Can convert the prodrug olmesartan medoxomil into its pharmacologically active metabolite olmerstatan, an angiotensin receptor blocker, in liver and intestine. May also activate beta-lactam antibiotics faropenem medoxomil and lenampicillin. This is Carboxymethylenebutenolidase homolog (CMBL) from Homo sapiens (Human).